An 84-amino-acid chain; its full sequence is Toluene-4-monooxygenase system, hydroxylase component subunit gamma (84 aa).

The protein belongs to the TmoB/XamoB family. The alkene monooxygenase multicomponent enzyme system is composed of an electron transfer component and a monooxygenase component interacting with the effector protein TmoD. The electron transfer component is composed of a ferredoxin reductase (TmoF) and a ferredoxin (TmoC), and the monooxygenase component is formed by a heterohexamer (dimer of heterotrimers) of two alpha subunits (TmoA), two beta subunits (TmoE) and two gamma subunits (TmoB).

It catalyses the reaction toluene + NADH + O2 + H(+) = 4-methylphenol + NAD(+) + H2O. It functions in the pathway xenobiotic degradation; toluene degradation. With respect to regulation, inhibited by Zn(2+) and Cu(2+). In terms of biological role, component of the toluene-4-monooxygenase multicomponent enzyme system which catalyzes the O2- and NADH-dependent hydroxylation of toluene to form p-cresol. Also able to convert benzene to phenol, catechol, and 1,2,3-trihydroxybenzene by successive hydroxylations. The polypeptide is Toluene-4-monooxygenase system, hydroxylase component subunit gamma (Ectopseudomonas mendocina (Pseudomonas mendocina)).